Consider the following 330-residue polypeptide: Glycine betaine/proline betaine-binding periplasmic protein (330 aa).

A signal peptide spans 1-21 (MRHSVLFATAFATLISTQTFA). Substrate-binding positions include Trp-86, His-90, and 161–163 (WGC). Residues Cys-157 and Cys-163 are joined by a disulfide bond.

The complex is composed of two ATP-binding proteins (ProV), two transmembrane proteins (ProW) and a solute-binding protein (ProX).

The protein localises to the periplasm. Its function is as follows. Part of the ProU ABC transporter complex involved in glycine betaine and proline betaine uptake. Binds glycine betaine and proline betaine with high affinity. The sequence is that of Glycine betaine/proline betaine-binding periplasmic protein from Escherichia coli (strain K12).